Here is a 306-residue protein sequence, read N- to C-terminus: 4-hydroxy-tetrahydrodipicolinate synthase (306 aa).

Thr49 serves as a coordination point for pyruvate. Residue Tyr136 is the Proton donor/acceptor of the active site. Lys164 serves as the catalytic Schiff-base intermediate with substrate. Ile207 is a binding site for pyruvate.

The protein belongs to the DapA family. In terms of assembly, homotetramer; dimer of dimers.

The protein localises to the cytoplasm. The enzyme catalyses L-aspartate 4-semialdehyde + pyruvate = (2S,4S)-4-hydroxy-2,3,4,5-tetrahydrodipicolinate + H2O + H(+). The protein operates within amino-acid biosynthesis; L-lysine biosynthesis via DAP pathway; (S)-tetrahydrodipicolinate from L-aspartate: step 3/4. Functionally, catalyzes the condensation of (S)-aspartate-beta-semialdehyde [(S)-ASA] and pyruvate to 4-hydroxy-tetrahydrodipicolinate (HTPA). The polypeptide is 4-hydroxy-tetrahydrodipicolinate synthase (Haloarcula marismortui (strain ATCC 43049 / DSM 3752 / JCM 8966 / VKM B-1809) (Halobacterium marismortui)).